The primary structure comprises 894 residues: Desmocollin-1 (894 aa).

The N-terminal stretch at 1–29 (MALASAAPGSIFCKQLLFSLLVLTLLCDA) is a signal peptide. Residues 30–134 (CQKVYLRVPS…KDTALKRSKR (105 aa)) constitute a propeptide that is removed on maturation. Cadherin domains are found at residues 135–242 (RWAP…APYF), 243–354 (EHRV…PPSF), 355–471 (TETS…GPEC), 472–575 (HPPV…DHAP), and 576–682 (QIDK…STRD). The Extracellular segment spans residues 135 to 691 (RWAPIPASLM…DVRPNVILGR (557 aa)). An N-linked (GlcNAc...) asparagine glycan is attached at Asn-165. Thr-385 bears the Phosphothreonine mark. The N-linked (GlcNAc...) asparagine glycan is linked to Asn-546. Residues 692–714 (WAILAMVLGSVLLLCILFTCFCV) traverse the membrane as a helical segment. Topologically, residues 715 to 894 (TAKRTVKKCF…RTLAKTCIKK (180 aa)) are cytoplasmic.

As to quaternary structure, binds to JUP/plakoglobin. Strongly expressed in epidermis, less in lymph node and tongue.

It localises to the cell membrane. The protein localises to the cell junction. The protein resides in the desmosome. Functionally, a component of desmosome cell-cell junctions which are required for positive regulation of cellular adhesion. Required for desmosome adhesion strength between the granular layers of the epidermis, as a result moderates epidermal proliferation and differentiation. Is therefore required to maintain postnatal epidermal barrier function and normal hair follicle morphology into adulthood. The sequence is that of Desmocollin-1 (DSC1) from Homo sapiens (Human).